An 880-amino-acid chain; its full sequence is Chaperone protein ClpB 1 (880 aa).

The Clp R domain maps to 6 to 148; the sequence is PNKFTDKAWE…EASIKAVRGS (143 aa). Repeat regions lie at residues 9–74 and 85–148; these read FTDK…TQRQ and LGRS…VRGS. The interval 161–343 is NBD1; sequence EALQKFGRDL…RRFQQVYVDQ (183 aa). Residue 208–215 coordinates ATP; the sequence is GEPGVGKT. Positions 344–554 are linker; sequence PSVENTISIL…IAEIVAKWTG (211 aa). Residues 394-530 are a coiled coil; sequence IDLVDEAAAQ…KEAKLLELQS (137 aa). The segment at 564–775 is NBD2; that stretch reads ERQKLLQLES…RVDDTILFHA (212 aa). Residue 614–621 coordinates ATP; it reads GPTGVGKT. The interval 776–880 is C-terminal; that stretch reads LSRSEMSHII…VKVSVTQITT (105 aa).

Belongs to the ClpA/ClpB family. As to quaternary structure, homohexamer. The oligomerization is ATP-dependent.

The protein resides in the cytoplasm. Its function is as follows. Part of a stress-induced multi-chaperone system, it is involved in the recovery of the cell from heat-induced damage, in cooperation with DnaK, DnaJ and GrpE. Acts before DnaK, in the processing of protein aggregates. Protein binding stimulates the ATPase activity; ATP hydrolysis unfolds the denatured protein aggregates, which probably helps expose new hydrophobic binding sites on the surface of ClpB-bound aggregates, contributing to the solubilization and refolding of denatured protein aggregates by DnaK. This is Chaperone protein ClpB 1 (clpB1) from Nostoc sp. (strain PCC 7120 / SAG 25.82 / UTEX 2576).